Consider the following 329-residue polypeptide: MAYKTPFSSQFPLSSSTLPLTLISLDDWGLVTATGPDTEKYLQGQVTADISALATNQHVLSAHCDAKGKMWSNLRLFHRGESFAYIERRSVLENQLTELKKYAVFSKIALAQDENALLLGVAGKNCRQALSSFFPTLPDADNAVVAHEATTLLHFSLPSERFLLVTNTATAEQLTEKLQAQLNNSEQWLALDIEAGFPIIDAANSTQFIPQATNLQALAGGVCFKKGCYTGQEMVARAKYRGANKRGMYWLAGSASKIPMAGDDLEWQLGDKWRRTGTVLAAVKLNNDNVWIQVVMNNDMESHSVFRVRDDEGHSLTIQPLPYSLNEEK.

Folate contacts are provided by W28 and W188.

The protein belongs to the tRNA-modifying YgfZ family.

The protein resides in the cytoplasm. In terms of biological role, folate-binding protein involved in regulating the level of ATP-DnaA and in the modification of some tRNAs. It is probably a key factor in regulatory networks that act via tRNA modification, such as initiation of chromosomal replication. The protein is tRNA-modifying protein YgfZ of Photorhabdus laumondii subsp. laumondii (strain DSM 15139 / CIP 105565 / TT01) (Photorhabdus luminescens subsp. laumondii).